Here is a 31-residue protein sequence, read N- to C-terminus: Photosystem II reaction center protein T (31 aa).

Residues 3–23 (SFAYILILTLAIATLFFAIAF) traverse the membrane as a helical segment.

The protein belongs to the PsbT family. In terms of assembly, PSII is composed of 1 copy each of membrane proteins PsbA, PsbB, PsbC, PsbD, PsbE, PsbF, PsbH, PsbI, PsbJ, PsbK, PsbL, PsbM, PsbT, PsbX, PsbY, PsbZ, Psb30/Ycf12, peripheral proteins PsbO, CyanoQ (PsbQ), PsbU, PsbV and a large number of cofactors. It forms dimeric complexes.

Its subcellular location is the cellular thylakoid membrane. Found at the monomer-monomer interface of the photosystem II (PS II) dimer, plays a role in assembly and dimerization of PSII. PSII is a light-driven water plastoquinone oxidoreductase, using light energy to abstract electrons from H(2)O, generating a proton gradient subsequently used for ATP formation. The sequence is that of Photosystem II reaction center protein T from Synechococcus sp. (strain WH7803).